Consider the following 673-residue polypeptide: Armadillo repeat-containing protein 8 (673 aa).

Alanine 2 is subject to N-acetylalanine. 14 ARM repeats span residues 51–92, 95–134, 138–176, 178–217, 224–265, 269–309, 313–352, 374–413, 416–455, 458–497, 501–540, 543–585, 588–627, and 634–673; these read NKQK…SLAM, ENNV…TIFT, TPEE…HCCK, PDHQ…VLAF, MTLV…YMCR, IRTD…YLIE, ELQR…HDLK, DIRK…SLSR, QQLR…NLLL, SPSK…NMAF, QKIK…NLLS, PHID…NIAD, TAKE…NLTW, and QERQ…QYLA. A Phosphoserine modification is found at serine 337. Serine 512 is subject to Phosphoserine.

In terms of assembly, identified in the CTLH complex that contains GID4, RANBP9 and/or RANBP10, MKLN1, MAEA, RMND5A (or alternatively its paralog RMND5B), GID8, ARMC8, WDR26 and YPEL5. Within this complex, MAEA, RMND5A (or alternatively its paralog RMND5B), GID8, WDR26, and RANBP9 and/or RANBP10 form the catalytic core, while GID4, MKLN1, ARMC8 and YPEL5 have ancillary roles.

The protein resides in the nucleus. It is found in the cytoplasm. Component of the CTLH E3 ubiquitin-protein ligase complex that selectively accepts ubiquitin from UBE2H and mediates ubiquitination and subsequent proteasomal degradation of the transcription factor HBP1. The protein is Armadillo repeat-containing protein 8 (Armc8) of Mus musculus (Mouse).